Consider the following 739-residue polypeptide: Pre-mRNA-splicing factor ATP-dependent RNA helicase ddx-15 (739 aa).

The segment covering 1-19 (MSSRHRLDLDGSGRGDRRR) has biased composition (basic and acidic residues). The interval 1 to 49 (MSSRHRLDLDGSGRGDRRRSPNRRSRSRSRSPHRRSSPDRKRQIGAVGN) is disordered. Basic residues predominate over residues 20 to 35 (SPNRRSRSRSRSPHRR). Residues 86 to 257 (MELLRNNQCI…FEDCPLLSVP (172 aa)) form the Helicase ATP-binding domain. 99-106 (GETGSGKT) is an ATP binding site. Positions 204–207 (DEAH) match the DEAH box motif. One can recognise a Helicase C-terminal domain in the interval 282 to 462 (TVIQIHMVEE…SVVLQLKKLG (181 aa)).

This sequence belongs to the DEAD box helicase family. DEAH subfamily. DDX15/PRP43 sub-subfamily.

The protein localises to the nucleus. The catalysed reaction is ATP + H2O = ADP + phosphate + H(+). Pre-mRNA processing factor involved in disassembly of spliceosomes after the release of mature mRNA. In Caenorhabditis elegans, this protein is Pre-mRNA-splicing factor ATP-dependent RNA helicase ddx-15.